The following is a 1673-amino-acid chain: Glutamine and serine-rich protein 1 (1673 aa).

8 disordered regions span residues 265–322, 411–543, 872–892, 923–961, 1050–1081, 1149–1182, 1216–1272, and 1390–1476; these read VIPS…SSQA, DQTR…KSYV, RHMS…LSIN, QDLP…PKEG, DENA…QYSS, VIRP…KAEE, LSAL…EQLA, and KSKV…PPPI. A compositionally biased stretch (polar residues) spans 289-309; the sequence is SSKTPKSQSVVSPELTQSYTK. 2 stretches are compositionally biased toward low complexity: residues 310–322 and 411–458; these read SSQN…SSQA and DQTR…PSDS. The segment covering 459–539 has biased composition (polar residues); that stretch reads YTSGQNQTLA…MQNSRTTADS (81 aa). Polar residues predominate over residues 947–956; it reads NIKNPPNVNQ. Residues 1222–1233 show a composition bias toward basic and acidic residues; the sequence is NSEKRLKTEGDK. Polar residues-rich tracts occupy residues 1259–1272 and 1397–1411; these read KPSQ…EQLA and ARTT…SKVS. Residues 1435 to 1451 show a composition bias toward basic and acidic residues; sequence TKAEPPPKKRKQWKEEF. The span at 1452–1462 shows a compositional bias: low complexity; the sequence is SSSQSDSSPDM.

The protein resides in the chromosome. Its function is as follows. Plays an essential role in the protection and maintenance of transcriptional and developmental programs. Protects many bivalent promoters and poised enhancers from hypermethylation, showing a marked preference for these regulatory elements over other types of promoters or enhancers. Mechanistically, cooperates with tet1 and binds to DNA in a common complex to inhibit the binding of dnmt3a/3b and therefore de novo methylation. This is Glutamine and serine-rich protein 1 (qser1) from Xenopus laevis (African clawed frog).